The sequence spans 342 residues: MENRMVTPFDVEDDREQYSLRPTTLKEYIGQKKVKANLDIFIKAAKKRSESLDHVLFYGPPGLGKTTLANIIANEMTGNLKVTSGPAIEKAGDLAAILTSLTDYDVLFIDEIHRLNRSIEEILYPAMEDYALDIVIGKGAAAKSIRLDLPKFTLIGATTRVGLLTSPLRDRFGMLCAMEFYTDEELMEIVVRSAAILNVNICREAAFEIGKRSRGTPRIANRLLKRVRDYCDVKHDGDIDLQGAKAALDLLEVDKEGLDKIDNKILEAIIFNFKGGPVGLETLAYFIGEELDTIEDVYEPYLIQKGFIMRTPRGRVASEKAYNHFGVTKKEEKDNQVSIFNK.

A large ATPase domain (RuvB-L) region spans residues 1–181; it reads MENRMVTPFD…FGMLCAMEFY (181 aa). ATP is bound by residues Leu20, Arg21, Gly62, Lys65, Thr66, Thr67, 128 to 130, Arg171, Tyr181, and Arg218; that span reads EDY. Residue Thr66 participates in Mg(2+) binding. Positions 182–252 are small ATPAse domain (RuvB-S); sequence TDEELMEIVV…GAKAALDLLE (71 aa). Positions 255-342 are head domain (RuvB-H); it reads KEGLDKIDNK…KDNQVSIFNK (88 aa). DNA is bound by residues Arg310 and Arg315.

The protein belongs to the RuvB family. As to quaternary structure, homohexamer. Forms an RuvA(8)-RuvB(12)-Holliday junction (HJ) complex. HJ DNA is sandwiched between 2 RuvA tetramers; dsDNA enters through RuvA and exits via RuvB. An RuvB hexamer assembles on each DNA strand where it exits the tetramer. Each RuvB hexamer is contacted by two RuvA subunits (via domain III) on 2 adjacent RuvB subunits; this complex drives branch migration. In the full resolvosome a probable DNA-RuvA(4)-RuvB(12)-RuvC(2) complex forms which resolves the HJ.

It localises to the cytoplasm. The enzyme catalyses ATP + H2O = ADP + phosphate + H(+). Its function is as follows. The RuvA-RuvB-RuvC complex processes Holliday junction (HJ) DNA during genetic recombination and DNA repair, while the RuvA-RuvB complex plays an important role in the rescue of blocked DNA replication forks via replication fork reversal (RFR). RuvA specifically binds to HJ cruciform DNA, conferring on it an open structure. The RuvB hexamer acts as an ATP-dependent pump, pulling dsDNA into and through the RuvAB complex. RuvB forms 2 homohexamers on either side of HJ DNA bound by 1 or 2 RuvA tetramers; 4 subunits per hexamer contact DNA at a time. Coordinated motions by a converter formed by DNA-disengaged RuvB subunits stimulates ATP hydrolysis and nucleotide exchange. Immobilization of the converter enables RuvB to convert the ATP-contained energy into a lever motion, pulling 2 nucleotides of DNA out of the RuvA tetramer per ATP hydrolyzed, thus driving DNA branch migration. The RuvB motors rotate together with the DNA substrate, which together with the progressing nucleotide cycle form the mechanistic basis for DNA recombination by continuous HJ branch migration. Branch migration allows RuvC to scan DNA until it finds its consensus sequence, where it cleaves and resolves cruciform DNA. This is Holliday junction branch migration complex subunit RuvB from Clostridium botulinum (strain 657 / Type Ba4).